The chain runs to 388 residues: MGKKAIQFGGGNIGRGFVAEFLHKAGYEVVFVDVMDKMVEALQQNKSYKVTEVSEEGEHTTTITNYRAINSKTHESDVIQEIATADVVTCAVGPHILKFIAPVIAKGIDARTESKPVAVIACENAIGATDTLHGFIKQHTSQDRVESLYDRAQFANSAIDRIVPQQAPNSGLDVRIEKFYEWAVEKTPFGSVGHPDIPAIHWVDNLEPYIERKLFTVNTSHATTAYFGHFRGKKMIADALEDEEIRGLVHKVLEETASLIVAKHDISEEEQKEYVKKIVSRISNPYLEDKVERVGRAPLRKLSRKERFIGPASQLAERGMKYDSLMDAVEMALRFQNVPGDDESAELANILNEQRAEDATIHLTGLDEEHPLYPAVLERVRKVQQGTK.

An NAD(+)-binding site is contributed by 5 to 16; sequence AIQFGGGNIGRG. The active site involves lysine 213.

The protein belongs to the mannitol dehydrogenase family. In terms of assembly, monomer.

The enzyme catalyses D-mannitol 1-phosphate + NAD(+) = beta-D-fructose 6-phosphate + NADH + H(+). Its function is as follows. Catalyzes the NAD(H)-dependent interconversion of D-fructose 6-phosphate and D-mannitol 1-phosphate in the mannitol metabolic pathway. Has a strong preference for NADH over NADPH. Required for protection of conidiospores against exogenous stresses such as high temperatures and an oxidative environment. The protein is Mannitol-1-phosphate 5-dehydrogenase (mpdA) of Aspergillus niger.